Here is a 155-residue protein sequence, read N- to C-terminus: Ribosomal RNA large subunit methyltransferase H (155 aa).

S-adenosyl-L-methionine contacts are provided by residues leucine 73, glycine 104, and 123-128; that span reads LSPLTL.

Belongs to the RNA methyltransferase RlmH family. As to quaternary structure, homodimer.

It localises to the cytoplasm. The catalysed reaction is pseudouridine(1915) in 23S rRNA + S-adenosyl-L-methionine = N(3)-methylpseudouridine(1915) in 23S rRNA + S-adenosyl-L-homocysteine + H(+). Its function is as follows. Specifically methylates the pseudouridine at position 1915 (m3Psi1915) in 23S rRNA. The sequence is that of Ribosomal RNA large subunit methyltransferase H from Pseudomonas fluorescens (strain ATCC BAA-477 / NRRL B-23932 / Pf-5).